Consider the following 307-residue polypeptide: Streptomycin 6-kinase (307 aa).

Residue 133–145 (LAGLLARLVSVPA) coordinates streptomycin. The Proton acceptor role is filled by aspartate 201.

This sequence belongs to the aminoglycoside phosphotransferase family.

It carries out the reaction streptomycin + ATP = streptomycin 6-phosphate + ADP + H(+). Functionally, the aminoglycoside phosphotransferases achieve inactivation of their antibiotic substrates by phosphorylation. The polypeptide is Streptomycin 6-kinase (sph) (Streptomyces glaucescens).